A 605-amino-acid chain; its full sequence is Adaptin medium chain homolog APM2 (605 aa).

The tract at residues 150–196 (EEWSPGEESSSSSGSDSDSEYSNTNKRKDKKKKRKKKKGTKGKSVGK) is disordered. Low complexity predominate over residues 155–171 (GEESSSSSGSDSDSEYS). Over residues 174–196 (NKRKDKKKKRKKKKGTKGKSVGK) the composition is skewed to basic residues. An MHD domain is found at 269–604 (KNEFFLDVIE…TVSDEEYAYI (336 aa)).

The protein belongs to the adaptor complexes medium subunit family. As to quaternary structure, component of the AP-1R complex composed of at least APM2, APL4 and APS1. Interacts with MIL1. Interacts with APL2.

It localises to the golgi apparatus membrane. The protein localises to the early endosome membrane. Its subcellular location is the cytoplasmic vesicle. The protein resides in the clathrin-coated vesicle membrane. Functionally, component of the AP-1-related (AP-1R) complex, an adapter protein complex that mediates of cargo protein sorting in clathrin-coated vesicles. AP-1R has a specific role in SNARE SNC1 sorting. In contrast to the APM1-containing AP-1 complex, AP-1R is incapable of sorting CHS3. This chain is Adaptin medium chain homolog APM2 (APM2), found in Saccharomyces cerevisiae (strain ATCC 204508 / S288c) (Baker's yeast).